We begin with the raw amino-acid sequence, 298 residues long: Tyrosine recombinase XerC (298 aa).

The Core-binding (CB) domain maps to 1–84 (MNHIQEAFLN…TLRTFYEYWM (84 aa)). Residues 105–286 (YLPQFFYEEE…SNQQLRKVYL (182 aa)) form the Tyr recombinase domain. Active-site residues include R145, K169, H238, R241, and H264. Catalysis depends on Y273, which acts as the O-(3'-phospho-DNA)-tyrosine intermediate.

It belongs to the 'phage' integrase family. XerC subfamily. Forms a cyclic heterotetrameric complex composed of two molecules of XerC and two molecules of XerD.

It localises to the cytoplasm. In terms of biological role, site-specific tyrosine recombinase, which acts by catalyzing the cutting and rejoining of the recombining DNA molecules. The XerC-XerD complex is essential to convert dimers of the bacterial chromosome into monomers to permit their segregation at cell division. It also contributes to the segregational stability of plasmids. This chain is Tyrosine recombinase XerC, found in Staphylococcus aureus (strain MRSA252).